The primary structure comprises 297 residues: Iron/alpha-ketoglutarate-dependent dioxygenase ausU (297 aa).

3 residues coordinate Fe cation: H130, D132, and H206.

Belongs to the PhyH family. In terms of assembly, homodimer. Fe cation serves as cofactor.

The protein operates within secondary metabolite biosynthesis; terpenoid biosynthesis. Its function is as follows. Iron/alpha-ketoglutarate-dependent dioxygenase; part of the gene cluster that mediates the biosynthesis of calidodehydroaustin, a fungal meroterpenoid. The first step of the pathway is the synthesis of 3,5-dimethylorsellinic acid by the polyketide synthase ausA. 3,5-dimethylorsellinic acid is then prenylated by the polyprenyl transferase ausN. Further epoxidation by the FAD-dependent monooxygenase ausM and cyclization by the probable terpene cyclase ausL lead to the formation of protoaustinoid A. Protoaustinoid A is then oxidized to spiro-lactone preaustinoid A3 by the combined action of the FAD-binding monooxygenases ausB and ausC, and the dioxygenase ausE. Acid-catalyzed keto-rearrangement and ring contraction of the tetraketide portion of preaustinoid A3 by ausJ lead to the formation of preaustinoid A4. The aldo-keto reductase ausK, with the help of ausH, is involved in the next step by transforming preaustinoid A4 into isoaustinone which is in turn hydroxylated by the P450 monooxygenase ausI to form austinolide. The cytochrome P450 monooxygenase ausG modifies austinolide to austinol. Austinol is further acetylated to austin by the O-acetyltransferase ausP, which spontaneously changes to dehydroaustin. The cytochrome P450 monooxygenase ausR then converts dehydroaustin is into 7-dehydrodehydroaustin. The hydroxylation catalyzed by ausR permits the O-acetyltransferase ausQ to add an additional acetyl group to the molecule, leading to the formation of acetoxydehydroaustin. The short chain dehydrogenase ausT catalyzes the reduction of the double bond present between carbon atoms 1 and 2 to convert 7-dehydrodehydroaustin into 1,2-dihydro-7-hydroxydehydroaustin. AusQ catalyzes not only an acetylation reaction but also the addition of the PKS ausV diketide product to 1,2-dihydro-7-hydroxydehydroaustin, forming precalidodehydroaustin. Finally, the iron/alpha-ketoglutarate-dependent dioxygenase converts precalidodehydroaustin into calidodehydroaustin. This chain is Iron/alpha-ketoglutarate-dependent dioxygenase ausU, found in Aspergillus calidoustus.